We begin with the raw amino-acid sequence, 264 residues long: Movement protein (264 aa).

Residues 210–219 (FRTKPSKRGP) are compositionally biased toward basic residues. A disordered region spans residues 210 to 264 (FRTKPSKRGPKNNNNLGKGRSGGRPKPKSFDEVEKEFDNLIEDEAETSVADSDSY). The span at 237–247 (KSFDEVEKEFD) shows a compositional bias: basic and acidic residues.

The protein belongs to the tobamovirus movement protein family. As to quaternary structure, binds to host RBCS at the plasmodesmata; this interaction seems required for viral systemic movement. In resistant plants, interacts with host MBP2C at host microtubules; this interaction prevents virus cell to cell movement. In resistant plants, interacts with host resistance (R) protein (e.g. tomato ToMV resistance protein TM-2(2), AC Q71BG9) at the host plasma membrane; this interaction triggers host defense responses leading to programmed cell death.

It is found in the host cytoplasm. It localises to the host cytoskeleton. The protein localises to the host cell junction. The protein resides in the host plasmodesma. Transports viral genome to neighboring plant cells directly through plasmosdesmata, without any budding. The movement protein allows efficient cell to cell propagation, by bypassing the host cell wall barrier. Forms a ribonucleoprotein complex with viral RNA. Binds microtubules and modulates microtubule stability. Can bind double-stranded DNA. Triggers host hypersensitive defense reaction in incompatible plants harboring resistance (R) proteins. This is Movement protein (MP) from Tomato mosaic virus (strain LII) (ToMV).